The following is a 714-amino-acid chain: A-kinase anchor protein 5 (714 aa).

Disordered stretches follow at residues 1 to 146 (METS…GYVR) and 243 to 333 (VLEN…VGHT). Residues 1 to 164 (METSVSEIQI…EIKAQIQPDE (164 aa)) form an essential to the intracellular anchoring function region. Phosphoserine is present on residues Ser4 and Ser22. Residues 10–32 (IETKDEKRPEAASPQKERQERKT) are compositionally biased toward basic and acidic residues. Cys36 carries S-palmitoyl cysteine lipidation. Over residues 37–50 (FKRRKKVNKKKAKA) the composition is skewed to basic residues. Composition is skewed to basic and acidic residues over residues 54–63 (TAEETEKHAP) and 88–100 (KPSE…KPSE). The short motif at 74–94 (AGAWASIKRLVTHRKPSESAE) is the AKAP CaM-binding element. Residue Cys123 is the site of S-palmitoyl cysteine attachment. The segment covering 243–268 (VLENSAADSPQPVTSTAPLSPATTHQ) has biased composition (polar residues). A compositionally biased stretch (basic and acidic residues) spans 285–301 (GKDDGRRKTAAEEKKSG). The stretch at 305-312 (LGQAEEAS) is one 1; approximate repeat. The interval 305 to 597 (LGQAEEASSV…PIVGQAEETV (293 aa)) is 28 X 8 AA repeats of V-G-Q-A-E-E-A-T. Residues 310-323 (EASSVSQADKSVLS) are compositionally biased toward polar residues. Residues 322-329 (LSQAEEAT) form a 2; approximate repeat. The 3; approximate repeat unit spans residues 330–337 (VGHTEEAT). Residues 350–357 (LSQAEEAT) form a 4; approximate repeat. The 5; approximate repeat unit spans residues 358-365 (VAQAKETV). A 6; approximate repeat occupies 366–373 (LSQAEEVK). The 7; approximate repeat unit spans residues 398–405 (VSQAEEAI). Residues 414–421 (MGQAEEAT) form an 8; approximate repeat. A run of 5 repeats spans residues 430-437 (VGQAEEAT), 438-445 (VGQAEEAT), 446-453 (VGQAEEAT), 454-461 (VGQAEEAT), and 462-469 (VGQAEEAT). A 14; approximate repeat occupies 470–477 (VGQAGEAT). Residues 486-493 (VGQAEEAI) form a 15; approximate repeat. Repeat copies occupy residues 494-501 (VGQAEEAT), 502-509 (VGQAEEAT), 510-517 (VGQAEEAT), and 518-525 (VGQAEEAT). Residues 526 to 533 (VDQAEEAT) form a 20; approximate repeat. Repeat unit 21 spans residues 534 to 541 (VGQAEEAT). The 22; approximate repeat unit spans residues 542-549 (VGQAGEAA). Residues 550-557 (VGQAEEAI) form a 23; approximate repeat. The 24; approximate repeat unit spans residues 558 to 565 (VAQAEEAT). Residues 566–573 (VGQAGEAT) form repeat 25. The stretch at 574 to 581 (VGQAEKAT) is one 26; approximate repeat. The stretch at 582-589 (VGQAEEPI) is one 27; approximate repeat. Residues 590–597 (VGQAEETV) form a 28; approximate repeat. Residues 675 to 696 (YETLLIETASSLVKNAIELSVE) form an RII-beta subunit binding domain region. The interval 697-714 (QLVNEMVSEDNQINTLFQ) is tethers NFATC2 to CRAC channels.

In terms of assembly, binding protein for dimer of the RII-beta regulatory subunit of cAMP-dependent protein kinase (PKA) and also for the protein kinase C (PKC) and the phosphatase calcineurin (PP2B). Each enzyme is inhibited when bound to the anchoring protein. Also binds the beta2-adrenergic receptor. Part of a complex containing AKAP5, ADCY5, ADCY6 and PDE4C. Interacts with ADCY8, and enhances its phosphorylation at lipid rafts. Interacts with ORAI1 (isoform alpha) (via N-terminus) upon store depletion and in response to LTC4. Does not interact with ORAI2 and ORAI3 paralogs. Interacts (via leucine zipper domain) with NFATC2/NFAT1. Interacts with calmodulin; the interaction is calcium-independent. Interacts with KCNQ2; the interaction may help KCNQ2 channel complex to retain calcium-bound calmodulin. Interacts with KCNK2; the channel is recruited to postsynaptic microdomains by AKAP5 where it can integrate neurotransmitter receptor signals. Part of a complex composed of AKAP5 and ADRB2. Post-translationally, palmitoylated. Palmitoylation at Cys-36 and Cys-123 plays a key role in the targeting of AKAP5 to lipid rafts. Palmitoylation by ZDHHC2 is required for AKAP5 function in LTP-stimulated recycling endosome exocytosis.

The protein resides in the postsynaptic recycling endosome membrane. It localises to the cell projection. The protein localises to the dendrite. Its subcellular location is the postsynaptic cell membrane. Its function is as follows. Multivalent scaffold protein that anchors the cAMP-dependent protein kinase/PKA to cytoskeletal and/or organelle-associated proteins, targeting the signal carried by cAMP to specific intracellular effectors. Association with the beta2-adrenergic receptor (beta2-AR) not only regulates beta2-AR signaling pathway, but also the activation by PKA by switching off the beta2-AR signaling cascade. Plays a role in long term synaptic potentiation by regulating protein trafficking from the dendritic recycling endosomes to the plasma membrane and controlling both structural and functional plasticity at excitatory synapses. In hippocampal pyramidal neurons, recruits KCNK2/TREK-1 channel at postsynaptic dense bodies microdomains and converts it to a leak channel no longer sensitive to stimulation by arachidonic acid, acidic pH or mechanical stress, nor inhibited by Gq-coupled receptors but still under the negative control of Gs-coupled receptors. Associates with ORAI1 pore-forming subunit of CRAC channels in Ca(2+) signaling microdomains where it recruits NFATC2/NFAT1 and couples store-operated Ca(2+) influx to calmodulin and calcineurin signaling and activation of NFAT-dependent transcriptional responses. The polypeptide is A-kinase anchor protein 5 (Akap5) (Rattus norvegicus (Rat)).